Reading from the N-terminus, the 283-residue chain is Pantothenate synthetase (283 aa).

30–37 (MGNLHDGH) serves as a coordination point for ATP. The Proton donor role is filled by H37. Q61 lines the (R)-pantoate pocket. Q61 lines the beta-alanine pocket. 149-152 (GEKD) is a binding site for ATP. (R)-pantoate is bound at residue Q155. Residue 186 to 189 (LSSR) coordinates ATP.

It belongs to the pantothenate synthetase family. Homodimer.

It is found in the cytoplasm. It carries out the reaction (R)-pantoate + beta-alanine + ATP = (R)-pantothenate + AMP + diphosphate + H(+). The protein operates within cofactor biosynthesis; (R)-pantothenate biosynthesis; (R)-pantothenate from (R)-pantoate and beta-alanine: step 1/1. Its function is as follows. Catalyzes the condensation of pantoate with beta-alanine in an ATP-dependent reaction via a pantoyl-adenylate intermediate. In Escherichia fergusonii (strain ATCC 35469 / DSM 13698 / CCUG 18766 / IAM 14443 / JCM 21226 / LMG 7866 / NBRC 102419 / NCTC 12128 / CDC 0568-73), this protein is Pantothenate synthetase.